The sequence spans 880 residues: MKQLTGAQIRQMFLDFFKEKGHAIEPSASLVPHEDPSLLWINSGVATLKKYFDGRVIPQNPRITNAQKSIRTNDIENVGKTARHHTFFEMLGNFSIGDYFKEEAITWAWEFLTSDKWIGFDKELLSVTIHPEDEEAFTIWHEKIGVPKERIIRLEENFWDIGEGPSGPNTEIFYDRGEAYGNDPSDPELYPGGENERYLEVWNLVFSQFNHNPDGSYTPLPKKNIDTGMGLERMTSIVQNVPTNFDTDLFMPMIGATESISGEKYRSGDAEKDMAFKVIADHIRTVTFAVGDGALPSNEGRGYVLRRLLRRAVRYAKKLNMNRPFMYELVPVVGEVMKDFYPEVLEKKDFIAKVVKNEEERFHETLHDGEAILAEVIAKAKEEKTTVISGVDAFRLYDTYGFPVELTEEYAEEAGMTVDHAGFEAEMEKQRERARAARQDVDSMQVQGGVLGEIKVASEFVGYGTVATESNVVALVKNGEYTDSLQAGEEGQLMLDVTPFYAESGGQIADSGYLLTDGVKVLVKDVQKAPNGQNLHKVVVEEGVLTKDATVKAVIDTKNRSSIVKNHTATHLLHQALKDVLGTHVNQAGSLVTAERLRFDFSHFGQVQADELEKIERIVNEKIWESIDVEISQKAIEEAKEMGAMALFGEKYGDVVRVVQVGDYSLELCGGCHVDNTASIGIFKIVAESGIGAGTRRIEAVTGKAAYELMNDQVSLLKEAAGKMKTNPKDILTRVDGLFAEVKQLQKENESLAAKLSNIEAGNLTDAVVSVDGINVLATKVNVADMNNLRTMMDDLKNKLESAVIVLAAVNDDKVNILAGVTKDLVGQGYHAGKLVKEVASRCGGGGGGRPDMAQAGGKNPAQVDEALAFVQEYVKSVSK.

Residues histidine 567, histidine 571, cysteine 669, and histidine 673 each contribute to the Zn(2+) site.

This sequence belongs to the class-II aminoacyl-tRNA synthetase family. It depends on Zn(2+) as a cofactor.

Its subcellular location is the cytoplasm. It catalyses the reaction tRNA(Ala) + L-alanine + ATP = L-alanyl-tRNA(Ala) + AMP + diphosphate. Catalyzes the attachment of alanine to tRNA(Ala) in a two-step reaction: alanine is first activated by ATP to form Ala-AMP and then transferred to the acceptor end of tRNA(Ala). Also edits incorrectly charged Ser-tRNA(Ala) and Gly-tRNA(Ala) via its editing domain. This is Alanine--tRNA ligase from Bacillus cytotoxicus (strain DSM 22905 / CIP 110041 / 391-98 / NVH 391-98).